The primary structure comprises 471 residues: COP9 signalosome complex subunit 1 (471 aa).

In terms of domain architecture, PCI spans 249-411 (CFLLASFDHC…KILYARDVDQ (163 aa)). Positions 445–471 (HVKSPPREGSQGELTPANSQSRMSTNM) are disordered. Phosphoserine occurs at positions 448 and 454. The span at 456–471 (GELTPANSQSRMSTNM) shows a compositional bias: polar residues. Thr459 carries the post-translational modification Phosphothreonine. The residue at position 463 (Ser463) is a Phosphoserine.

This sequence belongs to the CSN1 family. Component of the CSN complex, composed of COPS1/GPS1, COPS2, COPS3, COPS4, COPS5, COPS6, COPS7 (COPS7A or COPS7B), COPS8 and COPS9. In the complex, it probably interacts directly with COPS2, COPS3, COPS4 and COPS5. Interacts directly with inositol kinase ITPK1. Interacts with CAPN8. Interacts with USP48. Interacts with ASB4; this interaction negatively regulates GPS1. Expressed in the base region of the oxyntic and pyloric mucosae.

The protein resides in the cytoplasm. It localises to the nucleus. Functionally, essential component of the COP9 signalosome complex (CSN), a complex involved in various cellular and developmental processes. The CSN complex is an essential regulator of the ubiquitin (Ubl) conjugation pathway by mediating the deneddylation of the cullin subunits of SCF-type E3 ligase complexes, leading to decrease the Ubl ligase activity of SCF-type complexes such as SCF, CSA or DDB2. The complex is also involved in phosphorylation of p53/TP53, c-jun/JUN, IkappaBalpha/NFKBIA, ITPK1 and IRF8/ICSBP, possibly via its association with CK2 and PKD kinases. CSN-dependent phosphorylation of TP53 and JUN promotes and protects degradation by the Ubl system, respectively. Suppresses G-protein- and mitogen-activated protein kinase-mediated signal transduction. The chain is COP9 signalosome complex subunit 1 (Gps1) from Mus musculus (Mouse).